The chain runs to 163 residues: Ribosome maturation factor RimP (163 aa).

The segment at 66–85 is disordered; sequence ALDRDDPVPGPPYELEVSSP.

This sequence belongs to the RimP family.

The protein localises to the cytoplasm. Required for maturation of 30S ribosomal subunits. This Kocuria rhizophila (strain ATCC 9341 / DSM 348 / NBRC 103217 / DC2201) protein is Ribosome maturation factor RimP.